The primary structure comprises 357 residues: 3-dehydroquinate synthase (357 aa).

Residues 104-108, 128-129, lysine 141, and 168-171 contribute to the NAD(+) site; these read GVVGD, TT, and FLET. Positions 183, 243, and 260 each coordinate Zn(2+).

It belongs to the sugar phosphate cyclases superfamily. Dehydroquinate synthase family. Requires NAD(+) as cofactor. Co(2+) serves as cofactor. The cofactor is Zn(2+).

It localises to the cytoplasm. It catalyses the reaction 7-phospho-2-dehydro-3-deoxy-D-arabino-heptonate = 3-dehydroquinate + phosphate. It participates in metabolic intermediate biosynthesis; chorismate biosynthesis; chorismate from D-erythrose 4-phosphate and phosphoenolpyruvate: step 2/7. Functionally, catalyzes the conversion of 3-deoxy-D-arabino-heptulosonate 7-phosphate (DAHP) to dehydroquinate (DHQ). In Streptococcus pyogenes serotype M6 (strain ATCC BAA-946 / MGAS10394), this protein is 3-dehydroquinate synthase.